We begin with the raw amino-acid sequence, 172 residues long: Large ribosomal subunit protein bL17 (172 aa).

The interval 123-172 is disordered; the sequence is ATGSKRAQTEEAASQEPAAEAGKQPAEGATSVQTAEAADASQAEGEAEEK. A compositionally biased stretch (low complexity) spans 132 to 143; it reads EEAASQEPAAEA.

It belongs to the bacterial ribosomal protein bL17 family. In terms of assembly, part of the 50S ribosomal subunit. Contacts protein L32.

The sequence is that of Large ribosomal subunit protein bL17 from Thermobifida fusca (strain YX).